The primary structure comprises 258 residues: MVFAHLNLLRKIVGIIGNFIALCLFLSPTPTFVRIVKKKSVEEYSPIPYLATLINCLVWVLYGLPTVHPDSTLVITINGTGILIEIVFLTIFFVYCGRQKQRLIISAVIAAETAFIAILAVLVLTLQHTTEKRTMSVGIVCCVFNVMMYASPLSVMKMVIKTKSVEFMPFWLSVAGFLNAGVWTIYALMPFDPFMAIPNGIGCLFGLAQLILYGAYYKSTKRIMAERENQPGYVGLSSAIARTGSEKTANTNQEPNNV.

The Extracellular portion of the chain corresponds to methionine 1–lysine 11. Residues isoleucine 12 to phenylalanine 32 traverse the membrane as a helical segment. Residues isoleucine 12 to lysine 100 enclose the MtN3/slv 1 domain. The Cytoplasmic segment spans residues valine 33 to proline 46. A helical membrane pass occupies residues isoleucine 47 to valine 67. Residues histidine 68–leucine 73 lie on the Extracellular side of the membrane. The chain crosses the membrane as a helical span at residues valine 74–valine 94. The Cytoplasmic portion of the chain corresponds to tyrosine 95–arginine 102. Residues leucine 103–valine 123 form a helical membrane-spanning segment. At leucine 124–threonine 134 the chain is on the extracellular side. A helical membrane pass occupies residues methionine 135–valine 155. Positions serine 136–lysine 221 constitute a MtN3/slv 2 domain. At methionine 156–glutamate 166 the chain is on the cytoplasmic side. The helical transmembrane segment at phenylalanine 167 to alanine 187 threads the bilayer. The Extracellular segment spans residues leucine 188 to proline 193. The helical transmembrane segment at phenylalanine 194–glycine 214 threads the bilayer. Residues alanine 215 to valine 258 are Cytoplasmic-facing.

Belongs to the SWEET sugar transporter family. Forms heterooligomers with SWEET8, SWEET11, SWEET13, SWEET16 and SWEET17.

The protein localises to the cell membrane. Its function is as follows. Mediates both low-affinity uptake and efflux of sugar across the plasma membrane. This is Bidirectional sugar transporter SWEET7 from Arabidopsis thaliana (Mouse-ear cress).